Reading from the N-terminus, the 270-residue chain is 4-hydroxy-tetrahydrodipicolinate reductase (270 aa).

An NAD(+)-binding site is contributed by 7–12; sequence GVSGRM. Arginine 34 contributes to the NADP(+) binding site. NAD(+) contacts are provided by residues 97-99 and 121-124; these read GTT and SGNM. Histidine 155 serves as the catalytic Proton donor/acceptor. Histidine 156 serves as a coordination point for (S)-2,3,4,5-tetrahydrodipicolinate. Catalysis depends on lysine 159, which acts as the Proton donor. 165–166 provides a ligand contact to (S)-2,3,4,5-tetrahydrodipicolinate; the sequence is GT.

This sequence belongs to the DapB family.

The protein resides in the cytoplasm. It carries out the reaction (S)-2,3,4,5-tetrahydrodipicolinate + NAD(+) + H2O = (2S,4S)-4-hydroxy-2,3,4,5-tetrahydrodipicolinate + NADH + H(+). It catalyses the reaction (S)-2,3,4,5-tetrahydrodipicolinate + NADP(+) + H2O = (2S,4S)-4-hydroxy-2,3,4,5-tetrahydrodipicolinate + NADPH + H(+). It functions in the pathway amino-acid biosynthesis; L-lysine biosynthesis via DAP pathway; (S)-tetrahydrodipicolinate from L-aspartate: step 4/4. In terms of biological role, catalyzes the conversion of 4-hydroxy-tetrahydrodipicolinate (HTPA) to tetrahydrodipicolinate. This Allorhizobium ampelinum (strain ATCC BAA-846 / DSM 112012 / S4) (Agrobacterium vitis (strain S4)) protein is 4-hydroxy-tetrahydrodipicolinate reductase.